Consider the following 329-residue polypeptide: Small ribosomal subunit protein uS2 (329 aa).

The protein belongs to the universal ribosomal protein uS2 family.

The chain is Small ribosomal subunit protein uS2 from Bradyrhizobium sp. (strain ORS 278).